The chain runs to 392 residues: Branched-chain-amino-acid aminotransferase, mitochondrial (392 aa).

The transit peptide at 1–27 (MAAAALGQIWARKFLSVPWLLCGPRRY) directs the protein to the mitochondrion. Tyrosine 168 contacts substrate. An N6-(pyridoxal phosphate)lysine modification is found at lysine 229. Position 321 is an N6-acetyllysine (lysine 321).

Belongs to the class-IV pyridoxal-phosphate-dependent aminotransferase family. As to quaternary structure, homodimer. The cofactor is pyridoxal 5'-phosphate.

The protein resides in the mitochondrion. It carries out the reaction L-leucine + 2-oxoglutarate = 4-methyl-2-oxopentanoate + L-glutamate. The catalysed reaction is L-isoleucine + 2-oxoglutarate = (S)-3-methyl-2-oxopentanoate + L-glutamate. It catalyses the reaction L-valine + 2-oxoglutarate = 3-methyl-2-oxobutanoate + L-glutamate. Catalyzes the first reaction in the catabolism of the essential branched chain amino acids leucine, isoleucine, and valine. May also function as a transporter of branched chain alpha-keto acids. The chain is Branched-chain-amino-acid aminotransferase, mitochondrial (BCAT2) from Pongo abelii (Sumatran orangutan).